A 340-amino-acid chain; its full sequence is Holliday junction branch migration complex subunit RuvB (340 aa).

The interval methionine 1–tyrosine 183 is large ATPase domain (RuvB-L). ATP contacts are provided by residues leucine 22, arginine 23, glycine 64, lysine 67, threonine 68, threonine 69, glutamate 130–phenylalanine 132, arginine 173, tyrosine 183, and arginine 220. Threonine 68 provides a ligand contact to Mg(2+). Residues alanine 184–glutamate 254 form a small ATPAse domain (RuvB-S) region. A head domain (RuvB-H) region spans residues aspartate 257–phenylalanine 340. The DNA site is built by lysine 312 and arginine 317.

This sequence belongs to the RuvB family. Homohexamer. Forms an RuvA(8)-RuvB(12)-Holliday junction (HJ) complex. HJ DNA is sandwiched between 2 RuvA tetramers; dsDNA enters through RuvA and exits via RuvB. An RuvB hexamer assembles on each DNA strand where it exits the tetramer. Each RuvB hexamer is contacted by two RuvA subunits (via domain III) on 2 adjacent RuvB subunits; this complex drives branch migration. In the full resolvosome a probable DNA-RuvA(4)-RuvB(12)-RuvC(2) complex forms which resolves the HJ.

Its subcellular location is the cytoplasm. It carries out the reaction ATP + H2O = ADP + phosphate + H(+). Functionally, the RuvA-RuvB-RuvC complex processes Holliday junction (HJ) DNA during genetic recombination and DNA repair, while the RuvA-RuvB complex plays an important role in the rescue of blocked DNA replication forks via replication fork reversal (RFR). RuvA specifically binds to HJ cruciform DNA, conferring on it an open structure. The RuvB hexamer acts as an ATP-dependent pump, pulling dsDNA into and through the RuvAB complex. RuvB forms 2 homohexamers on either side of HJ DNA bound by 1 or 2 RuvA tetramers; 4 subunits per hexamer contact DNA at a time. Coordinated motions by a converter formed by DNA-disengaged RuvB subunits stimulates ATP hydrolysis and nucleotide exchange. Immobilization of the converter enables RuvB to convert the ATP-contained energy into a lever motion, pulling 2 nucleotides of DNA out of the RuvA tetramer per ATP hydrolyzed, thus driving DNA branch migration. The RuvB motors rotate together with the DNA substrate, which together with the progressing nucleotide cycle form the mechanistic basis for DNA recombination by continuous HJ branch migration. Branch migration allows RuvC to scan DNA until it finds its consensus sequence, where it cleaves and resolves cruciform DNA. The sequence is that of Holliday junction branch migration complex subunit RuvB from Syntrophus aciditrophicus (strain SB).